We begin with the raw amino-acid sequence, 229 residues long: Probable U3 small nucleolar RNA-associated protein 11 (229 aa).

2 disordered regions span residues 1–23 and 199–229; these read MSSL…ESRK and KKPG…QRKR.

Belongs to the UTP11 family. In terms of assembly, component of the ribosomal small subunit (SSU) processome.

The protein localises to the nucleus. The protein resides in the nucleolus. Functionally, involved in nucleolar processing of pre-18S ribosomal RNA. The chain is Probable U3 small nucleolar RNA-associated protein 11 from Oryza sativa subsp. japonica (Rice).